The primary structure comprises 1373 residues: MVSLRDNIEAQPLSHNRRIRKNFGHINLVADIPNLIEIQKNSYEKNFLQLNIKDSERKNKGLQSILNSIFPISDSSNVANLEFVKYEFDTPKYDVEECSQRSLSYAAPLKVTLRLSIWDIDEDTGTREIKGIKEQEVYMGDIPLMTKNGTFIINGTERVVVSQMHRSPGVFFYHDEGKVHSSGKLLYSARVIPYRGSWLDLEFDAKDVIYFRIDRKRKLYATTLLRAIGMSTEEIIKFYYNSVTYKLVKNKGWAVKFIPQHITAHRLTSDLVDADTGNILLKAGQKITPRLAKKYFGEGLNNILVAHETLIGKYLSEDLRDPASDEVLAKIGEMITADMLNVINDLKIKNVNVLVINPQSGPYIRNTLFADKNQDREAALCDIFRVLRPGEPANIEAAESLFYNLFFDTERYDLSEVGRIKMNSRLELNISEEVTVLTIDDIKNIVRVLVELKDGKGIIDDIDHLGNRRVRSVGELIENQFRIGLVRMEKSVIERMSAGDVDTVMPHDLVNSKILVSVVKEFFSTSQLSQFMDQTNPLSEITHKRRLSALGPGGLSRDRAGFEVRDVHPTHYGRICPIETPEGQNIGLINSMATYARINKHGFIESPYRRVKDGCVTDEVVYLSAIEEGKYKIGQANSKINKDGKLQGEFINCRVEGGNFVMVEPYEVDFIDVTPMQVVSVAASLIPFLENDDANRALMGSNMQRQAVPLIKTDAPFVGTGVEGVVAKDSGASVLALHDGIVEQVDSNRIVIRTLEQKVDGSPSVDIYNLLKFQKSNHNTCINQKPLVKVGHYVKKNDIIADGPSTDNGEIALGRNVLVAFLPWNGYNFEDSILISERIVKEDVFTSIHIEEFEVIARDTRLGPEEITRDIPNVSEEALRHLDEVGIIYIGAEVKAGDILVGKVTPKSESPITPEEKLLRAIFGEKAFDVKDSSLHVPSGVSGTVVEVRVFSRRGVEKDQRAIAIEKQQIEKFAKDRDDELEIIEHFVFSWLEKLLVGQVIINGPKQVKVGQTITTEMLKGLSKGQFWQITVEDANVMNEIEQIKTHYDEKKEALDKRFATKVEKLQSGDDLPQGALKVVKVFIATKHKLQPGDKMAGRHGNKGVISRIVPEEDMPFLEDGTVVDIVLNPLGLPSRMNIGQILETHLGWASINLAKKISTLVKEYKNKHIGIEQIKKFLIELYGENINSILERPEEEIIAFCKKVSKGVHFATPVFDGAKVQDVKDMLKLAGQDPSGQVKLIDGRTGEYFDRLVTVGQKYLLKLHHLVDNKIHSRSIGPYSLVTQQPLGGKSHFGGQRFGEMECWALQAYGAAYTLQEMLTVKSDDVNGRIKTYDSIVRGENNFESGIPESFNVMIKEFRSLCLNVKLEVTSS.

This sequence belongs to the RNA polymerase beta chain family. In terms of assembly, the RNAP catalytic core consists of 2 alpha, 1 beta, 1 beta' and 1 omega subunit. When a sigma factor is associated with the core the holoenzyme is formed, which can initiate transcription.

The enzyme catalyses RNA(n) + a ribonucleoside 5'-triphosphate = RNA(n+1) + diphosphate. In terms of biological role, DNA-dependent RNA polymerase catalyzes the transcription of DNA into RNA using the four ribonucleoside triphosphates as substrates. The polypeptide is DNA-directed RNA polymerase subunit beta (Rickettsia rickettsii (strain Iowa)).